A 209-amino-acid polypeptide reads, in one-letter code: Superoxide dismutase [Mn/Fe] (209 aa).

Fe(3+) is bound by residues His-38, His-90, Asp-172, and His-176. Mn(2+) contacts are provided by His-38, His-90, Asp-172, and His-176.

It belongs to the iron/manganese superoxide dismutase family. Requires Mn(2+) as cofactor. The cofactor is Fe(3+).

It carries out the reaction 2 superoxide + 2 H(+) = H2O2 + O2. Its function is as follows. Destroys superoxide anion radicals which are normally produced within the cells and which are toxic to biological systems. Catalyzes the dismutation of superoxide anion radicals into O2 and H2O2 by successive reduction and oxidation of the transition metal ion at the active site. The protein is Superoxide dismutase [Mn/Fe] (sodB) of Rickettsia typhi (strain ATCC VR-144 / Wilmington).